A 2774-amino-acid chain; its full sequence is Teneurin-2 (2774 aa).

One can recognise a Teneurin N-terminal domain in the interval Met1–Cys375. At Met1 to Ser379 the chain is on the cytoplasmic side. 2 positions are modified to phosphoserine: Ser90 and Ser124. The interval Thr111–Asn271 is disordered. A compositionally biased stretch (polar residues) spans Ser141–Thr155. Thr155 is subject to Phosphothreonine. At Ser157 the chain carries Phosphoserine. Positions Asn159 to Gly168 are enriched in basic and acidic residues. Over residues Thr174–Ser188 the composition is skewed to low complexity. Residues Asp202–Asp211 are compositionally biased toward polar residues. Residues Ser229–Pro240 are compositionally biased toward low complexity. A helical transmembrane segment spans residues Ala380–Leu400. The Extracellular segment spans residues Gly401–Arg2774. Residues Asn443 and Asn482 are each glycosylated (N-linked (GlcNAc...) asparagine). EGF-like domains follow at residues Asp575–Ala603, Ala605–Asp634, Pro636–Glu668, Glu669–Leu701, Ala702–Ser735, Val738–Asp766, Val769–Thr797, and Asp808–Asn841. 22 disulfides stabilise this stretch: Cys576/Cys586, Cys580/Cys591, Cys593/Cys602, Cys611/Cys622, Cys624/Cys633, Cys640/Cys651, Cys645/Cys656, Cys658/Cys667, Cys672/Cys683, Cys677/Cys688, Cys690/Cys699, Cys710/Cys723, Cys725/Cys734, Cys739/Cys749, Cys743/Cys754, Cys756/Cys765, Cys770/Cys780, Cys774/Cys785, Cys787/Cys796, Cys810/Cys820, Cys814/Cys829, and Cys831/Cys840. N-linked (GlcNAc...) asparagine glycans are attached at residues Asn925, Asn948, and Asn1267. 5 NHL repeats span residues Leu1272–Leu1316, Ala1342–Ile1386, Leu1401–Arg1452, Leu1474–Leu1501, and Cys1530–Asn1573. Residues Tyr1583 to His1602 form a YD 1 repeat. Asn1616 is a glycosylation site (N-linked (GlcNAc...) asparagine). YD repeat units follow at residues Tyr1619–Arg1639, Tyr1682–Phe1701, and Tyr1702–His1724. N-linked (GlcNAc...) asparagine glycans are attached at residues Asn1712, Asn1749, Asn1773, Asn1807, and Asn1892. 18 YD repeats span residues Tyr1895–Asp1914, Tyr1936–Glu1954, Tyr1955–Ser1975, Tyr1982–Asp1999, Tyr2000–Lys2021, Tyr2022–Thr2039, Tyr2042–Thr2062, Tyr2065–Ile2085, Tyr2093–Pro2113, Tyr2119–Tyr2136, Tyr2137–Val2163, Tyr2165–Gln2178, Tyr2179–Thr2202, Tyr2205–Ser2225, Tyr2226–Leu2246, Tyr2248–Gly2268, Tyr2280–Tyr2300, and Tyr2302–Phe2322. N-linked (GlcNAc...) asparagine glycosylation occurs at Asn1993. N-linked (GlcNAc...) asparagine glycosylation is present at Asn2197. N-linked (GlcNAc...) asparagine glycosylation occurs at Asn2337. One copy of the YD 23 repeat lies at Tyr2348–Leu2389. N-linked (GlcNAc...) asparagine glycosylation occurs at Asn2648.

It belongs to the tenascin family. Teneurin subfamily. As to quaternary structure, homodimer; disulfide-linked. Heterodimer with either TENM1 or TENM3. May also form heterodimer with TENM4. Interacts with ADGRL1 isoform 2. Post-translationally, derives from the membrane form by proteolytic processing. In terms of processing, derives from the plasma membrane form by proteolytic cleavage and translocates to the nucleus. Homophilic binding of the C-terminal extracellular domain stimulates its proteolytic cleavage and release in the cytoplasmic. Is subjected to rapid degradation by the proteasome pathway. Expressed in the brain (at protein level).

It localises to the cell membrane. The protein resides in the presynaptic cell membrane. Its subcellular location is the postsynaptic cell membrane. It is found in the endoplasmic reticulum. The protein localises to the golgi apparatus. It localises to the synapse. The protein resides in the cell projection. Its subcellular location is the dendritic spine. It is found in the filopodium. The protein localises to the growth cone. It localises to the nucleus. The protein resides in the PML body. Functionally, involved in neural development, regulating the establishment of proper connectivity within the nervous system. Acts as a ligand of the ADGRL1 and ADGRL3 receptors that are expressed at the surface of adjacent cells. Promotes the formation of filopodia and enlarged growth cone in neuronal cells. Mediates axon guidance and homophilic and heterophilic cell-cell adhesion. May function as a cellular signal transducer. Its function is as follows. Induces gene transcription inhibition. The sequence is that of Teneurin-2 (Tenm2) from Rattus norvegicus (Rat).